Here is a 419-residue protein sequence, read N- to C-terminus: MQIYMVGGAVRDRLLGRPVNDRDWVVVGATPDDLAARGFLPVGRDFPVFLHPETREEYALARTERKSGRGYRGFVVDTAPDVTLEQDLSRRDLTINAMAVRGEDPAAWELVDPYGGARDLQAKLLRHVTDAFREDPVRILRVARFAARFTDFSVAPETMALMREMVDAGEAADLVPERVWQEIARGLMEAAPSRMFEVLRGCGALAVLLPELDRLWGVPQRAEYHPEVDTGVHVMMVLDMAARLHAPLAVRFASLVHDLGKGTTPADVLPRHIGHEQRSATLLADVCERLRVPVECRETADVVAREHGNIHRSAELGAAALVRLLERCDALRKPARFADVLLACECDARGRLGFEETPYPQRQRLLGALQAARSVDTAAVAARAQARGAAGPQVGEWIRRARGDAVQEWMAAQPPAAGT.

The ATP site is built by glycine 8 and arginine 11. Positions 8 and 11 each coordinate CTP. Aspartate 21 and aspartate 23 together coordinate Mg(2+). ATP contacts are provided by arginine 91, arginine 141, and arginine 144. CTP contacts are provided by arginine 91, arginine 141, and arginine 144. An HD domain is found at 230-331 (TGVHVMMVLD…VRLLERCDAL (102 aa)).

It belongs to the tRNA nucleotidyltransferase/poly(A) polymerase family. Bacterial CCA-adding enzyme type 1 subfamily. Monomer. Can also form homodimers and oligomers. The cofactor is Mg(2+). Requires Ni(2+) as cofactor.

It carries out the reaction a tRNA precursor + 2 CTP + ATP = a tRNA with a 3' CCA end + 3 diphosphate. The enzyme catalyses a tRNA with a 3' CCA end + 2 CTP + ATP = a tRNA with a 3' CCACCA end + 3 diphosphate. Catalyzes the addition and repair of the essential 3'-terminal CCA sequence in tRNAs without using a nucleic acid template. Adds these three nucleotides in the order of C, C, and A to the tRNA nucleotide-73, using CTP and ATP as substrates and producing inorganic pyrophosphate. tRNA 3'-terminal CCA addition is required both for tRNA processing and repair. Also involved in tRNA surveillance by mediating tandem CCA addition to generate a CCACCA at the 3' terminus of unstable tRNAs. While stable tRNAs receive only 3'-terminal CCA, unstable tRNAs are marked with CCACCA and rapidly degraded. This chain is Multifunctional CCA protein, found in Paracidovorax citrulli (strain AAC00-1) (Acidovorax citrulli).